The sequence spans 251 residues: Small ribosomal subunit protein uS2 (251 aa).

A disordered region spans residues 232-251 (EAIAEMDEQVEEDAEEASND).

This sequence belongs to the universal ribosomal protein uS2 family.

The sequence is that of Small ribosomal subunit protein uS2 from Chlorobaculum parvum (strain DSM 263 / NCIMB 8327) (Chlorobium vibrioforme subsp. thiosulfatophilum).